A 922-amino-acid chain; its full sequence is Neuropilin-1 (922 aa).

The signal sequence occupies residues 1 to 21 (MERGLPLLCATLALALALAGA). At 22 to 855 (FRSDKCGGTI…PGNVLKTLDP (834 aa)) the chain is on the extracellular side. 3 disulfide bridges follow: Cys-27-Cys-54, Cys-82-Cys-104, and Cys-147-Cys-173. 2 consecutive CUB domains span residues 27-141 (CGGT…YEIF) and 147-265 (CSQN…YSVL). A glycan (N-linked (GlcNAc...) asparagine) is linked at Asn-150. 3 residues coordinate Ca(2+): Glu-195, Asp-209, and Asp-250. Cysteines 206 and 228 form a disulfide. Residues Asn-261, Asn-300, and Asn-522 are each glycosylated (N-linked (GlcNAc...) asparagine). 2 cysteine pairs are disulfide-bonded: Cys-275/Cys-424 and Cys-431/Cys-583. F5/8 type C domains lie at 275 to 424 (CMEA…VYGC) and 431 to 583 (CSGM…LLGC). Residue Ser-612 is glycosylated (O-linked (Xyl...) (chondroitin sulfate) serine; alternate). A glycan (O-linked (Xyl...) (heparan sulfate) serine; alternate) is linked at Ser-612. The MAM domain maps to 645–811 (TYGFNCEFGW…NHIPQEDCAK (167 aa)). O-linked (Xyl...) (chondroitin sulfate) serine glycosylation occurs at Ser-829. An N-linked (GlcNAc...) asparagine glycan is attached at Asn-841. Residues 856–880 (ILITIIAMSALGVLLGAVCGVVLYC) traverse the membrane as a helical segment. Over 881–922 (ACWHNGMSERNLSALENYNFELVDGVKLKKDKLNPQSNYSEA) the chain is Cytoplasmic. Ser-893 bears the Phosphoserine mark.

This sequence belongs to the neuropilin family. Homodimer, and heterodimer with NRP2. Binds PLXNB1. Interacts with FER. Interacts with VEGFA. Interacts with ABCB8/MITOSUR in mitochondria. In terms of tissue distribution, found in the embryonic nervous system. Expressed in dorsal root ganglia.

The protein localises to the mitochondrion membrane. Its subcellular location is the cell membrane. It localises to the cytoplasm. Functionally, cell-surface receptor involved in the development of the cardiovascular system, in angiogenesis, in the formation of certain neuronal circuits and in organogenesis outside the nervous system. Mediates the chemorepulsant activity of semaphorins. Recognizes a C-end rule (CendR) motif R/KXXR/K on its ligands which causes cellular internalization and vascular leakage. It binds to semaphorin 3A, the PLGF-2 isoform of PGF, the VEGF165 isoform of VEGFA and VEGFB. Coexpression with KDR results in increased VEGF165 binding to KDR as well as increased chemotaxis. Regulates VEGF-induced angiogenesis. Binding to VEGFA initiates a signaling pathway needed for motor neuron axon guidance and cell body migration, including for the caudal migration of facial motor neurons from rhombomere 4 to rhombomere 6 during embryonic development. Regulates mitochondrial iron transport via interaction with ABCB8/MITOSUR. The protein is Neuropilin-1 (Nrp1) of Rattus norvegicus (Rat).